An 830-amino-acid chain; its full sequence is Beta-glucosidase A (830 aa).

The active site involves Asp-769.

It belongs to the glycosyl hydrolase 3 family.

It catalyses the reaction Hydrolysis of terminal, non-reducing beta-D-glucosyl residues with release of beta-D-glucose.. B.fibrisolvens beta-glucosidase hydrolyzes cellobiose to a limited extent, cellotriose to cellobiose and glucose, and cellotetraose and cellopentaose to predominantly glucose. In Butyrivibrio fibrisolvens, this protein is Beta-glucosidase A (bglA).